A 77-amino-acid polypeptide reads, in one-letter code: Translation initiation factor IF-1, chloroplastic (77 aa).

The S1-like domain maps to 1-71; the sequence is MKEQKWIHEG…TRGRIIYRLR (71 aa).

This sequence belongs to the IF-1 family. In terms of assembly, component of the 30S ribosomal translation pre-initiation complex which assembles on the 30S ribosome in the order IF-2 and IF-3, IF-1 and N-formylmethionyl-tRNA(fMet); mRNA recruitment can occur at any time during PIC assembly.

The protein localises to the plastid. Its subcellular location is the chloroplast. One of the essential components for the initiation of protein synthesis. Stabilizes the binding of IF-2 and IF-3 on the 30S subunit to which N-formylmethionyl-tRNA(fMet) subsequently binds. Helps modulate mRNA selection, yielding the 30S pre-initiation complex (PIC). Upon addition of the 50S ribosomal subunit IF-1, IF-2 and IF-3 are released leaving the mature 70S translation initiation complex. This Daucus carota (Wild carrot) protein is Translation initiation factor IF-1, chloroplastic.